The primary structure comprises 161 residues: Phosphopantetheine adenylyltransferase (161 aa).

Position 9 (Ser-9) interacts with substrate. ATP-binding positions include 9-10 and His-17; that span reads SF. Residues Lys-41, Leu-73, and Lys-87 each coordinate substrate. ATP is bound by residues 88–90, Glu-98, and 123–129; these read GLR and YSYLSSS.

The protein belongs to the bacterial CoaD family. Homohexamer. Requires Mg(2+) as cofactor.

It localises to the cytoplasm. The enzyme catalyses (R)-4'-phosphopantetheine + ATP + H(+) = 3'-dephospho-CoA + diphosphate. It participates in cofactor biosynthesis; coenzyme A biosynthesis; CoA from (R)-pantothenate: step 4/5. Functionally, reversibly transfers an adenylyl group from ATP to 4'-phosphopantetheine, yielding dephospho-CoA (dPCoA) and pyrophosphate. The chain is Phosphopantetheine adenylyltransferase from Clostridium novyi (strain NT).